Here is a 365-residue protein sequence, read N- to C-terminus: Alanine racemase (365 aa).

Catalysis depends on lysine 36, which acts as the Proton acceptor; specific for D-alanine. Lysine 36 bears the N6-(pyridoxal phosphate)lysine mark. Arginine 132 is a substrate binding site. Tyrosine 257 acts as the Proton acceptor; specific for L-alanine in catalysis. Methionine 305 provides a ligand contact to substrate.

Belongs to the alanine racemase family. Pyridoxal 5'-phosphate serves as cofactor.

It carries out the reaction L-alanine = D-alanine. It participates in amino-acid biosynthesis; D-alanine biosynthesis; D-alanine from L-alanine: step 1/1. Catalyzes the interconversion of L-alanine and D-alanine. May also act on other amino acids. The polypeptide is Alanine racemase (alr) (Xylella fastidiosa (strain Temecula1 / ATCC 700964)).